A 214-amino-acid chain; its full sequence is Single-pass membrane and coiled-coil domain-containing protein 1 (214 aa).

Positions 5–40 (TTTLISLKEAMKRVDNKLRALDTQFKELDVTKDNLT) form a coiled coil. A helical membrane pass occupies residues 59–81 (IWTAALALGFTSMELNIVYSYVI). Positions 193 to 214 (KQAQDPENSRAPLKELMPPVKD) are disordered.

It is found in the membrane. The polypeptide is Single-pass membrane and coiled-coil domain-containing protein 1 (Smco1) (Mus musculus (Mouse)).